The following is a 164-amino-acid chain: Putative Cys-tRNA(Pro)/Cys-tRNA(Cys) deacylase EbsC (164 aa).

Belongs to the prolyl-tRNA editing family. YbaK/EbsC subfamily.

Affects the expression of the receptor, named binding substance, that mediates mating aggregate formation. Could be a regulatory protein that suppresses the function or expression of ebsA and/or ebsMB. The chain is Putative Cys-tRNA(Pro)/Cys-tRNA(Cys) deacylase EbsC from Enterococcus faecalis (strain ATCC 700802 / V583).